The primary structure comprises 188 residues: dCTP deaminase (188 aa).

DCTP-binding positions include 111 to 116, 135 to 137, glutamine 156, tyrosine 170, lysine 179, and glutamine 180; these read KSTYAR and TLE. The active-site Proton donor/acceptor is the glutamate 137.

The protein belongs to the dCTP deaminase family. As to quaternary structure, homotrimer.

The catalysed reaction is dCTP + H2O + H(+) = dUTP + NH4(+). It functions in the pathway pyrimidine metabolism; dUMP biosynthesis; dUMP from dCTP (dUTP route): step 1/2. Its function is as follows. Catalyzes the deamination of dCTP to dUTP. The chain is dCTP deaminase from Rickettsia canadensis (strain McKiel).